Consider the following 204-residue polypeptide: ATP synthase subunit b 2 (204 aa).

A disordered region spans residues 8-28 (AQSSTTEGAEAHDAAAAGEVH). Residues 56–76 (LLWLAITFGLFYLLMSKVIIP) form a helical membrane-spanning segment.

It belongs to the ATPase B chain family. In terms of assembly, F-type ATPases have 2 components, F(1) - the catalytic core - and F(0) - the membrane proton channel. F(1) has five subunits: alpha(3), beta(3), gamma(1), delta(1), epsilon(1). F(0) has three main subunits: a(1), b(2) and c(10-14). The alpha and beta chains form an alternating ring which encloses part of the gamma chain. F(1) is attached to F(0) by a central stalk formed by the gamma and epsilon chains, while a peripheral stalk is formed by the delta and b chains.

It is found in the cell inner membrane. In terms of biological role, f(1)F(0) ATP synthase produces ATP from ADP in the presence of a proton or sodium gradient. F-type ATPases consist of two structural domains, F(1) containing the extramembraneous catalytic core and F(0) containing the membrane proton channel, linked together by a central stalk and a peripheral stalk. During catalysis, ATP synthesis in the catalytic domain of F(1) is coupled via a rotary mechanism of the central stalk subunits to proton translocation. Its function is as follows. Component of the F(0) channel, it forms part of the peripheral stalk, linking F(1) to F(0). The b'-subunit is a diverged and duplicated form of b found in plants and photosynthetic bacteria. In Rhizobium meliloti (strain 1021) (Ensifer meliloti), this protein is ATP synthase subunit b 2 (atpF2).